Consider the following 76-residue polypeptide: uncharacterized protein (76 aa).

This is an uncharacterized protein from Bacillus subtilis (strain 168).